The following is a 288-amino-acid chain: Probable ketoamine kinase VV1_2562 (288 aa).

Residue 92–94 coordinates ATP; the sequence is NFL. Catalysis depends on D195, which acts as the Proton acceptor.

Belongs to the fructosamine kinase family.

In terms of biological role, ketoamine kinase that phosphorylates ketoamines on the third carbon of the sugar moiety to generate ketoamine 3-phosphate. The sequence is that of Probable ketoamine kinase VV1_2562 from Vibrio vulnificus (strain CMCP6).